The primary structure comprises 129 residues: Replication initiation control protein YabA (129 aa).

Positions 103, 105, 119, and 122 each coordinate Zn(2+).

This sequence belongs to the YabA family. Homotetramer. Interacts with both DnaA and DnaN, acting as a bridge between these two proteins. The cofactor is Zn(2+).

The protein localises to the cytoplasm. The protein resides in the nucleoid. Involved in control of chromosome replication initiation. Inhibits the cooperative binding of DnaA to the oriC region, thus negatively regulating initiation of chromosome replication. Inhibits the ability of DnaA-ATP to form a helix on DNA; does not disassemble preformed DnaA-DNA helices. Decreases the residence time of DnaA on the chromosome at its binding sites (oriC, replication forks and promoter-binding sites). Tethers DnaA to the replication machinery via the DNA polymerase beta sliding clamp subunit (dnaN). Associates with oriC and other DnaA targets on the chromosome in a DnaA-dependent manner. This Listeria innocua serovar 6a (strain ATCC BAA-680 / CLIP 11262) protein is Replication initiation control protein YabA.